A 400-amino-acid chain; its full sequence is Enoyl-[acyl-carrier-protein] reductase [NADH] (400 aa).

NAD(+) contacts are provided by residues 48–53, 74–75, 111–112, and 139–140; these read GSSSGY, FE, DA, and LA. Substrate is bound at residue tyrosine 225. Tyrosine 235 serves as the catalytic Proton donor. NAD(+) contacts are provided by residues lysine 244 and 273–275; that span reads VVT.

It belongs to the TER reductase family. Monomer.

The catalysed reaction is a 2,3-saturated acyl-[ACP] + NAD(+) = a (2E)-enoyl-[ACP] + NADH + H(+). It functions in the pathway lipid metabolism; fatty acid biosynthesis. Involved in the final reduction of the elongation cycle of fatty acid synthesis (FAS II). Catalyzes the reduction of a carbon-carbon double bond in an enoyl moiety that is covalently linked to an acyl carrier protein (ACP). The chain is Enoyl-[acyl-carrier-protein] reductase [NADH] from Shewanella oneidensis (strain ATCC 700550 / JCM 31522 / CIP 106686 / LMG 19005 / NCIMB 14063 / MR-1).